The sequence spans 781 residues: MAEAVLENVNVPAVVSKDECIYCFESPYNEPLALNASPKHSLNICLNCFQATCNRHVPLHIRVTEYACDTIHSNYLTIAKVEKPKQENVEENNNNKKIKLQVIETSEDDTHNTIWSLQRFNGENVPRTVLSKSTDSDISSTALEKIEKILKAKSQDFEDKKNSWVLEISTCPHTENFQIPSKPENTVNLNQCSSCDLTQNLWLCLHCGNIGCGREQIGIDGHSHALDHYRSNNNHPLAIKLGSLSSSTYDLYCYACDDETRFPDNVNLGSALQIYGINIQEKIADEKTLVQLQVEQNENWQFRMVDSSGKEFEKLSASKNYGCGLINLGNSCYLNSVIQSLVNGGVPNWSLDFLGSKFPLDVVYPDNNLKCQWIKLLNAMKCEPELYPNGIKPTTFKKCIGQNHQEFSSNRQQDAMEFLTFLLDLLDKKFFSSSSSGIPNPNDLVRFMMEDRLQCNICGKVKYSYEPTEAIQIPLEENDEPQDMLERIKAYFEGQTIEFKCANCKEKVTANKKPGFKSLPQTLILNPIRIRLQNWIPVKTSNELSLPGLIDRDDMLDVSSYLSQGFDPQTENLLPDEDENRSSFTPNQCSISQLIEMGFTQNASVRALFNTGNQDAESAMNWLFQHMDDPDLNDPFVPPPNVPKKDKREVDEVSLTSMLSMGLNPNLCRKALILNNGDVNRSVEWVFNNMDDDGTFPEPEVPNEEQQQKKDLGYSTAKPYALTAVICHKGNSVHSGHYVVFIRKLVADKWKWVLYNDEKLVAADSIEDMKKNGYIYFYTRC.

Residues 169-279 (STCPHTENFQ…SALQIYGINI (111 aa)) form a UBP-type zinc finger. Residues Cys-171, His-173, Cys-192, Cys-195, Cys-204, Cys-207, Cys-212, His-224, His-228, His-235, Cys-253, and Cys-256 each contribute to the Zn(2+) site. The 459-residue stretch at 323-781 (CGLINLGNSC…NGYIYFYTRC (459 aa)) folds into the USP domain. The Nucleophile role is filled by Cys-332. UBA domains are found at residues 576-626 (DEDE…LFQH) and 649-689 (EVDE…VFNN). The active-site Proton acceptor is His-737.

This sequence belongs to the peptidase C19 family.

Its subcellular location is the cytoplasm. It is found in the nucleus. It catalyses the reaction Thiol-dependent hydrolysis of ester, thioester, amide, peptide and isopeptide bonds formed by the C-terminal Gly of ubiquitin (a 76-residue protein attached to proteins as an intracellular targeting signal).. In terms of biological role, required for the adaptation to the presence of glucose in the growth medium; mediates the degradation of enzymes involved in gluconeogenesis when cells are shifted to glucose-containing medium. Required for proteasome-dependent catabolite degradation of fructose-1,6-bisphosphatase (FBP1). Accelerates proteasomal breakdown of ubiquitinated proteins as it disassembles free ubiquitin chains that would compete with ubiquitinated proteins to bind to the proteasome. In Saccharomyces cerevisiae (strain ATCC 204508 / S288c) (Baker's yeast), this protein is Ubiquitin carboxyl-terminal hydrolase 14 (UBP14).